Here is a 176-residue protein sequence, read N- to C-terminus: Transmembrane protein 238 (176 aa).

The tract at residues 1-22 (MAAAPAVCASQGSPPGAPSAPA) is disordered. Residues 1–36 (MAAAPAVCASQGSPPGAPSAPAAAPAPAAGLGRCRM) are Cytoplasmic-facing. The segment covering 9–22 (ASQGSPPGAPSAPA) has biased composition (low complexity). The helical transmembrane segment at 37-57 (ALLLAVALDVAGMAALLTGVF) threads the bilayer. The Extracellular portion of the chain corresponds to 58–69 (AQLQVRGRDFGD). The chain crosses the membrane as a helical span at residues 70-90 (LLIYSGALLVFLSLLGWILWY). The Cytoplasmic portion of the chain corresponds to 91–176 (TGNIEISRQE…GPGAAGAGSE (86 aa)). Over residues 124-137 (SAPAAAGQRPAPGS) the composition is skewed to low complexity. Residues 124–157 (SAPAAAGQRPAPGSRRARRAARAPPPPAAGSRRV) form a disordered region. Ser175 bears the Phosphoserine mark.

The protein resides in the membrane. This is Transmembrane protein 238 (TMEM238) from Homo sapiens (Human).